We begin with the raw amino-acid sequence, 286 residues long: ATP synthase gamma chain (286 aa).

This sequence belongs to the ATPase gamma chain family. In terms of assembly, F-type ATPases have 2 components, CF(1) - the catalytic core - and CF(0) - the membrane proton channel. CF(1) has five subunits: alpha(3), beta(3), gamma(1), delta(1), epsilon(1). CF(0) has three main subunits: a, b and c.

The protein resides in the cell membrane. Produces ATP from ADP in the presence of a proton gradient across the membrane. The gamma chain is believed to be important in regulating ATPase activity and the flow of protons through the CF(0) complex. The sequence is that of ATP synthase gamma chain from Bacillus mycoides (strain KBAB4) (Bacillus weihenstephanensis).